A 449-amino-acid chain; its full sequence is Phosphoglucosamine mutase (449 aa).

Ser-101 functions as the Phosphoserine intermediate in the catalytic mechanism. Positions 101, 243, 245, and 247 each coordinate Mg(2+). Ser-101 is subject to Phosphoserine.

It belongs to the phosphohexose mutase family. Mg(2+) is required as a cofactor. Post-translationally, activated by phosphorylation.

It carries out the reaction alpha-D-glucosamine 1-phosphate = D-glucosamine 6-phosphate. Its function is as follows. Catalyzes the conversion of glucosamine-6-phosphate to glucosamine-1-phosphate. This chain is Phosphoglucosamine mutase, found in Syntrophus aciditrophicus (strain SB).